A 1080-amino-acid chain; its full sequence is Presequence protease 2, chloroplastic/mitochondrial (1080 aa).

The N-terminal 84 residues, 1–84 (MLRSLTCSST…NGQFSRLSIR (84 aa)), are a transit peptide targeting the chloroplast and mitochondrion. Histidine 161 lines the Zn(2+) pocket. Glutamate 164 (proton acceptor) is an active-site residue. Histidine 165 is a binding site for Zn(2+). Residue glutamate 239 is part of the active site. Glutamate 261 is a Zn(2+) binding site. Arginine 704 serves as a coordination point for Mg(2+).

The protein belongs to the peptidase M16 family. PreP subfamily. In terms of assembly, homodimer. Zn(2+) is required as a cofactor. The cofactor is Mg(2+). In terms of tissue distribution, expressed in leaves, flowers and roots, but not detected in siliques and shoots.

Its subcellular location is the plastid. It localises to the chloroplast stroma. The protein resides in the mitochondrion matrix. With respect to regulation, completely inhibited by the metal chelator orthophenanthroline. In terms of biological role, ATP-independent protease that degrades both mitochondrial and chloroplastic transit peptides after their cleavage. Also degrades other unstructured peptides. Specific for peptides in the range of 10 to 65 residues. Shows a preference for cleavage after small polar residues and before basic residues, but without any positional preference. This chain is Presequence protease 2, chloroplastic/mitochondrial (PREP2), found in Arabidopsis thaliana (Mouse-ear cress).